The chain runs to 798 residues: Putative antiporter subunit mnhA2 (798 aa).

The next 21 membrane-spanning stretches (helical) occupy residues 1–21, 33–53, 78–98, 109–129, 133–153, 167–187, 209–229, 241–261, 272–292, 300–320, 337–357, 381–401, 431–451, 472–492, 526–546, 593–613, 625–645, 649–669, 674–694, 710–730, and 766–786; these read MSLVYLLSTLILIMVILLFTL, IALLAPIVASVYFLYQLPSVM, GLSLFFSLLISLIGLAVVYYA, LPRFYVYLLLFMFSMLGIVTA, ILMYVFWELTSVSSFLLIVYW, FMITVFGGLALLAGFIMIYIV, FIPIIILLLLGAFTKSAQFPF, TPVSAYLHSATMVKAGIFLLF, FYIYSVTFVGLITMIFGAVNA, AILAYSTISQLGMIVSMVGLG, MILFAALFHLMNHALYKGALF, VFPITHIVMLLSALSMAGIPF, IITVIGVIASIFTLVYGVYMI, PFLFTLPSAIMMILLPVIFFI, GFNLPLILSLIVIVVGFIMAL, ITITLLIFSMVVIYGMIQAGF, GPIEVITLIVVFVLGIALTFI, LTMVVLNGIIGYCVTIFFILM, LALTQLVVETITTILFIVSFS, AVKIIVSLLMAVIVVTLVFIA, and IDTLFEGMVLIIAGLGIYTLL.

It belongs to the CPA3 antiporters (TC 2.A.63) subunit A family. As to quaternary structure, may form a heterooligomeric complex that consists of seven subunits: mnhA2, mnhB2, mnhC2, mnhD2, mnhE2, mnhF2 and mnhG2.

The protein localises to the cell membrane. This is Putative antiporter subunit mnhA2 (mnhA2) from Staphylococcus saprophyticus subsp. saprophyticus (strain ATCC 15305 / DSM 20229 / NCIMB 8711 / NCTC 7292 / S-41).